The following is a 133-amino-acid chain: MEISLLQAFALGIIAFIAGLDMFNGLTHMHRPVVLGPLVGLVLGDLHTGILTGGTLELVWMGLAPLAGAQPPNVIIGTIVGTAFAITTGVKPDVAVGVAVPFAVAVQMGITFLFSVMSGVMSRCDLATNPRRI.

Over Met-1–Glu-2 the chain is Cytoplasmic. In terms of domain architecture, PTS EIIC type-4 spans Met-1 to Ile-133. The helical transmembrane segment at Ile-3–Phe-23 threads the bilayer. Residues Asn-24–Pro-32 lie on the Periplasmic side of the membrane. A helical transmembrane segment spans residues Val-33–Gly-53. Residues Gly-54–Pro-65 are Cytoplasmic-facing. Residues Leu-66 to Ile-86 traverse the membrane as a helical segment. The Periplasmic portion of the chain corresponds to Thr-87 to Asp-93. A helical membrane pass occupies residues Val-94–Phe-114. At Ser-115 to Ile-133 the chain is on the cytoplasmic side.

The protein localises to the cell inner membrane. In terms of biological role, the phosphoenolpyruvate-dependent sugar phosphotransferase system (PTS), a major carbohydrate active -transport system, catalyzes the phosphorylation of incoming sugar substrates concomitant with their translocation across the cell membrane. This system is involved in N-acetylgalactosamine transport. This Escherichia coli (strain K12) protein is Putative N-acetylgalactosamine permease IIC component 2 (agaW).